Consider the following 481-residue polypeptide: p-aminobenzoyl-glutamate hydrolase subunit B (481 aa).

Forms a heterodimer with AbgA. The cofactor is Mn(2+).

Its function is as follows. Component of the p-aminobenzoyl-glutamate hydrolase multicomponent enzyme system which catalyzes the cleavage of p-aminobenzoyl-glutamate (PABA-GLU) to form p-aminobenzoate (PABA) and glutamate. AbgAB does not degrade dipeptides and the physiological role of abgABT should be clarified. This is p-aminobenzoyl-glutamate hydrolase subunit B (abgB) from Escherichia coli (strain K12).